We begin with the raw amino-acid sequence, 650 residues long: Phosphatidylinositol-3,5-bisphosphate 3-phosphatase MTMR14 (650 aa).

The segment at 1–27 (MAGARAAAAAASAGSSASSGNQPPQEL) is disordered. The residue at position 194 (K194) is an N6-acetyllysine. N-linked (GlcNAc...) asparagine glycosylation occurs at N226. C330 serves as the catalytic Phosphocysteine intermediate. A 1,2-diacyl-sn-glycero-3-phospho-(1D-myo-inositol-3,5-bisphosphate)-binding residues include G333, W334, D335, R336, and R382. Residues G333, W334, D335, R336, and R382 each coordinate a 1,2-diacyl-sn-glycero-3-phospho-(1D-myo-inositol-3-phosphate). The segment at 476-546 (AAWRKSHSSS…PRSVDHPLPG (71 aa)) is disordered. S518 bears the Phosphoserine mark. N519 is a glycosylation site (N-linked (GlcNAc...) asparagine). A phosphoserine mark is found at S530, S580, and S624. The residue at position 638 (R638) is an Omega-N-methylarginine.

The protein belongs to the protein-tyrosine phosphatase family. Non-receptor class myotubularin subfamily. In terms of tissue distribution, expressed in various tissues, including heart, skeletal muscle, placenta, liver, lung, kidney and pancreas.

It is found in the cytoplasm. The catalysed reaction is a 1,2-diacyl-sn-glycero-3-phospho-(1D-myo-inositol-3,5-bisphosphate) + H2O = a 1,2-diacyl-sn-glycero-3-phospho-(1D-myo-inositol-5-phosphate) + phosphate. It carries out the reaction a 1,2-diacyl-sn-glycero-3-phospho-(1D-myo-inositol-3-phosphate) + H2O = a 1,2-diacyl-sn-glycero-3-phospho-(1D-myo-inositol) + phosphate. Lipid phosphatase that specifically dephosphorylates the D-3 position of phosphatidylinositol 3-phosphate and phosphatidylinositol 3,5-bisphosphate, generating phosphatidylinositol and phosphatidylinositol 5-phosphate. This is Phosphatidylinositol-3,5-bisphosphate 3-phosphatase MTMR14 from Homo sapiens (Human).